A 466-amino-acid polypeptide reads, in one-letter code: Gamma-aminobutyric acid permease (466 aa).

Topologically, residues 2 to 20 (GQSSQPHELGGGLKSRHVT) are cytoplasmic. Transmembrane regions (helical) follow at residues 21 to 41 (MLSI…VAIA) and 42 to 62 (EAGP…VMIM). Residues 63-96 (RMLAEMAVATPDTGSFSTYADKAIGRWAGYTIGW) lie on the Cytoplasmic side of the membrane. The helical transmembrane segment at 97-117 (LYWWFWVLVIPLEANIAAMIL) threads the bilayer. Residue His-118 is a topological domain, periplasmic. Residues 119 to 139 (SWVPGIPIWLFSLVITLALTG) form a helical membrane-spanning segment. Residues 140–153 (SNLLSVKNYGEFEF) are Cytoplasmic-facing. Residues 154 to 174 (WLALCKVIAILAFIFLGAVAI) traverse the membrane as a helical segment. Over 175–199 (SGFYPYAEVSGISRLWDSGGFMPNG) the chain is Periplasmic. Residues 200–220 (FGAVLSAMLITMFSFMGAEIV) traverse the membrane as a helical segment. Over 221-246 (TIAAAESDTPEKHIVRATNSVIWRIS) the chain is Cytoplasmic. A helical transmembrane segment spans residues 247–267 (IFYLCSIFVVVALIPWNMPGL). Over 268-286 (KAVGSYRSVLELLNIPHAK) the chain is Periplasmic. A helical membrane pass occupies residues 287-307 (LIMDCVILLSVTSCLNSALYT). Topologically, residues 308 to 334 (ASRMLYSLSRRGDAPAVMGKINRSKTP) are cytoplasmic. A helical membrane pass occupies residues 335–355 (YVAVLLSTGAAFLTVVVNYYA). The Periplasmic segment spans residues 356–358 (PAK). A helical transmembrane segment spans residues 359–379 (VFKFLIDSSGAIALLVYLVIA). Over 380–402 (VSQLRMRKILRAEGSEIRLRMWL) the chain is Cytoplasmic. Residues 403–423 (YPWLTWLVIGFITFVLVVMLF) form a helical membrane-spanning segment. Residues 424–428 (RPAQQ) are Periplasmic-facing. Residues 429–449 (LEVISTGLLAIGIICTVPIMA) form a helical membrane-spanning segment. At 450-466 (RWKKLVLWQKTPVHNTR) the chain is on the cytoplasmic side.

This sequence belongs to the amino acid-polyamine-organocation (APC) superfamily. Amino acid transporter (AAT) (TC 2.A.3.1) family. Monomer.

Its subcellular location is the cell inner membrane. It catalyses the reaction 4-aminobutanoate(in) + H(+)(in) = 4-aminobutanoate(out) + H(+)(out). Its pathway is amino-acid degradation; 4-aminobutanoate degradation. Its activity is regulated as follows. Uptake is stimulated by ammonium sulfate and abolished by 2,4-dinitrophenol. Is affected both topologically and kinetically by phospholipid composition of the membrane. In cells lacking phosphatidylethanolamine (PE), the N-terminal hairpin is inverted relative to the membrane and the rate of GABA transport is reduced by more than 99%. Functionally, transporter for gamma-aminobutyrate (GABA). Transport is driven by the membrane potential. Can also transport a number of GABA analogs such as nipecotic acid or muscimol. This Escherichia coli (strain K12) protein is Gamma-aminobutyric acid permease.